A 333-amino-acid chain; its full sequence is tRNA uridine(34) hydroxylase (333 aa).

The region spanning 123-217 is the Rhodanese domain; sequence SDPEVVLVDT…YLEEVNKAES (95 aa). C177 serves as the catalytic Cysteine persulfide intermediate. The segment covering 313–327 has biased composition (basic and acidic residues); that stretch reads QKKEALRKQSAEKNK. The segment at 313–333 is disordered; the sequence is QKKEALRKQSAEKNKAKQANA.

The protein belongs to the TrhO family.

It carries out the reaction uridine(34) in tRNA + AH2 + O2 = 5-hydroxyuridine(34) in tRNA + A + H2O. Its function is as follows. Catalyzes oxygen-dependent 5-hydroxyuridine (ho5U) modification at position 34 in tRNAs. This is tRNA uridine(34) hydroxylase from Shewanella oneidensis (strain ATCC 700550 / JCM 31522 / CIP 106686 / LMG 19005 / NCIMB 14063 / MR-1).